Reading from the N-terminus, the 643-residue chain is MADNTGTEGTGCSGWFLVEAIVENTTGQQISEDEDEAVEDSGLDMVDFIDDRPITHNSMEAQALLNEQEADAHYAAVQDLKRKYLGSPYVSPLSNIEQAVECDISPRLDAITLSRQPKKVKRRLFDRPELTDSGYGNTEVEAETQVERNGEPEDCGGGGQGRDTEGVEQVETEVQTHSNTQQHTGTTRVLELLKCKNIRATLLGKFKDCYGLSYTDLIRQFKSDKTTCGDWVIAAFGVHHSVSEAFQNLIQPVTTYSHIQWLTNAWGMVLLALVRFKVNKNRCTVARMMATRLNIPEDHMLIEPPKIQSGVAALYWFRSGISNASIVTGETPEWITRQTIVEHGLADNQFKLADMVQWAYDNDFCEESEIAFEYAQRADIDANARAFLNSNCQAKYVKDCATMCKHYKTAEMKKMNMKQWIKFRSSKFEDTGNWKPIVQFLRHQNIEFIPFLTKLKMWLHGTPKKNCIAIVGPPDTGKSCFCMSLIKFLGGTVISYVNSSSHFWLQPLCNAKVALLDDVTQSCWVYMDTYMRNLLDGNPMTIDRKHKSLALIKCPPLIVTSNIDITKEEKYKYLCSRVTLFTFPNPFPFDRNGNALYDLCETNWKCFFARLSSSLDIQTSEDEDDGDNSQAFRCVPGTVVRTV.

Residues 81-83 (KRK) carry the Nuclear localization signal motif. S87, S91, and S105 each carry phosphoserine; by host. Residues 104–113 (ISPRLDAITL) carry the Nuclear export signal motif. The disordered stretch occupies residues 130–166 (LTDSGYGNTEVEAETQVERNGEPEDCGGGGQGRDTEG). The tract at residues 181 to 347 (QQHTGTTRVL…QTIVEHGLAD (167 aa)) is DNA-binding region. The 151-residue stretch at 446-596 (IEFIPFLTKL…FPFDRNGNAL (151 aa)) folds into the SF3 helicase domain. Residue 472-479 (GPPDTGKS) participates in ATP binding. Residue K553 forms a Glycyl lysine isopeptide (Lys-Gly) (interchain with G-Cter in SUMO) linkage.

It belongs to the papillomaviridae E1 protein family. Can form hexamers. Interacts with E2 protein; this interaction increases E1 DNA binding specificity. Interacts with host DNA polymerase subunit POLA2. Interacts with host single stranded DNA-binding protein RPA1. Interacts with host TOP1; this interaction stimulates the enzymatic activity of TOP1. Post-translationally, phosphorylated. Sumoylated.

It is found in the host nucleus. It carries out the reaction Couples ATP hydrolysis with the unwinding of duplex DNA by translocating in the 3'-5' direction.. The enzyme catalyses ATP + H2O = ADP + phosphate + H(+). Its function is as follows. ATP-dependent DNA 3'-5' helicase required for initiation of viral DNA replication. It forms a complex with the viral E2 protein. The E1-E2 complex binds to the replication origin which contains binding sites for both proteins. During the initial step, a dimer of E1 interacts with a dimer of protein E2 leading to a complex that binds the viral origin of replication with high specificity. Then, a second dimer of E1 displaces the E2 dimer in an ATP-dependent manner to form the E1 tetramer. Following this, two E1 monomers are added to each half of the site, which results in the formation of two E1 trimers on the viral ori. Subsequently, two hexamers will be created. The double hexamer acts as a bi-directional helicase machinery and unwinds the viral DNA and then recruits the host DNA polymerase to start replication. This Homo sapiens (Human) protein is Replication protein E1.